The following is a 538-amino-acid chain: MHITNLGLHQVSFQSGDSYKGAEETGKHKGVSVISYQRVKNGERNKGIEALNRLYLQNQTSLTGKSLLFARDRAEVFYEAIKLAGGDTSKIKAMMERLDTYKLGEVNKRHINELNKVISEEIRAQLGIKNKKELQTKIKQIFTDYLNNKNWGPVNKNISHHGKNYGFQLTPASHMKIGNKNIFVKEYNGKGICCASTRESDHIANMWLSKVVDDEGKEIFSGIRHGVISAYGLKKNSSERAVAARNKAEELVSAALYSRPELLSQALSGKTVDLKIVSTSLLTPTSLTGGEESMLKDQVNALKGLNSKRGEPTKLLIRNSDGLLKEVSVNLKVVTFNFGVNELALKMGLGWRNVDKLNDESICSLLGDNFLKNGVIGGWAAEAIEKNPPCKNDVIYLANQIKEIINKKLQKNDNGEPYKLSQRMTLLAYTIGAVPCWNCKSGKDRTGMQDAEIKREIIRKHETGQFSQLNSKLSSEEKRLFSTILMNSGNMEIQEMNTGVPGNKVMKKLPLSSLELSYSERIGDSKIWNMVKGYSSFV.

Residue cysteine 439 is part of the active site. Residues 439 to 445 carry the CX5R motif motif; that stretch reads CKSGKDR.

Belongs to the phosphatase IpgD/SopB family.

It is found in the secreted. The catalysed reaction is a 1,2-diacyl-sn-glycero-3-phospho-(1D-myo-inositol-4,5-bisphosphate) + H2O = a 1,2-diacyl-sn-glycero-3-phospho-(1D-myo-inositol-5-phosphate) + phosphate. Converts phosphatidylinositol 4,5-bisphosphate (PtdIns 4,5-P2) to PtdIns 5-P. IpgD is injected by Shigella into the host cell and is required for invasion. The accumulation of PtdIns 5-P causes membrane ruffling and actin cytoskeleton rearrangements at the entry site. The chain is Inositol phosphate phosphatase IpgD (ipgD) from Shigella sonnei.